A 225-amino-acid polypeptide reads, in one-letter code: Large ribosomal subunit protein uL1 (225 aa).

Belongs to the universal ribosomal protein uL1 family. In terms of assembly, part of the 50S ribosomal subunit.

Its function is as follows. Binds directly to 23S rRNA. Probably involved in E site tRNA release. In terms of biological role, protein L1 is also a translational repressor protein, it controls the translation of its operon by binding to its mRNA. In Thermofilum pendens (strain DSM 2475 / Hrk 5), this protein is Large ribosomal subunit protein uL1.